The primary structure comprises 238 residues: Ribosomal RNA small subunit methyltransferase G (238 aa).

S-adenosyl-L-methionine-binding positions include Gly-77, Phe-82, Ala-128–Glu-129, and Arg-147.

The protein belongs to the methyltransferase superfamily. RNA methyltransferase RsmG family.

The protein localises to the cytoplasm. Its function is as follows. Specifically methylates the N7 position of guanine in position 535 of 16S rRNA. The sequence is that of Ribosomal RNA small subunit methyltransferase G from Geobacillus sp. (strain WCH70).